The primary structure comprises 129 residues: Small ribosomal subunit protein uS11 (129 aa).

The protein belongs to the universal ribosomal protein uS11 family. In terms of assembly, part of the 30S ribosomal subunit.

Its function is as follows. Located on the platform of the 30S subunit. This Haloarcula marismortui (strain ATCC 43049 / DSM 3752 / JCM 8966 / VKM B-1809) (Halobacterium marismortui) protein is Small ribosomal subunit protein uS11.